Consider the following 376-residue polypeptide: Probable ATP-dependent RNA helicase YfmL (376 aa).

Residues 35 to 205 form the Helicase ATP-binding domain; that stretch reads AQLIMDGKDV…RELAQEPEVL (171 aa). ATP is bound at residue 48 to 55; sequence SPTGTGKT. Positions 153 to 156 match the DEAD box motif; that stretch reads DETD. In terms of domain architecture, Helicase C-terminal spans 231–374; sequence KLLQKLSRLE…EAVYAGGKLK (144 aa).

The protein belongs to the DEAD box helicase family.

The enzyme catalyses ATP + H2O = ADP + phosphate + H(+). In terms of biological role, a probable DEAD-box RNA helicase that plays a role in ribosomal 50S subunit assembly. May be a non-specific RNA helicase. In Bacillus subtilis (strain 168), this protein is Probable ATP-dependent RNA helicase YfmL (yfmL).